A 115-amino-acid chain; its full sequence is Nucleoid-associated protein P9211_00201 (115 aa).

It belongs to the YbaB/EbfC family. Homodimer.

It is found in the cytoplasm. The protein localises to the nucleoid. Functionally, binds to DNA and alters its conformation. May be involved in regulation of gene expression, nucleoid organization and DNA protection. This chain is Nucleoid-associated protein P9211_00201, found in Prochlorococcus marinus (strain MIT 9211).